The sequence spans 503 residues: Glycerol kinase (503 aa).

Threonine 14 is a binding site for ADP. Residues threonine 14, threonine 15, and serine 16 each contribute to the ATP site. Threonine 14 lines the sn-glycerol 3-phosphate pocket. Arginine 18 provides a ligand contact to ADP. The sn-glycerol 3-phosphate site is built by arginine 84, glutamate 85, tyrosine 136, and aspartate 246. The glycerol site is built by arginine 84, glutamate 85, tyrosine 136, aspartate 246, and glutamine 247. Residues threonine 268 and glycine 311 each contribute to the ADP site. ATP contacts are provided by threonine 268, glycine 311, glutamine 315, and glycine 412. Glycine 412 and asparagine 416 together coordinate ADP.

The protein belongs to the FGGY kinase family. Homotetramer and homodimer (in equilibrium). Heterodimer with EIIA-Glc. Binds 1 zinc ion per glycerol kinase EIIA-Glc dimer. The zinc ion is important for dimerization.

The catalysed reaction is glycerol + ATP = sn-glycerol 3-phosphate + ADP + H(+). It participates in polyol metabolism; glycerol degradation via glycerol kinase pathway; sn-glycerol 3-phosphate from glycerol: step 1/1. Its activity is regulated as follows. Activity of this regulatory enzyme is affected by several metabolites. Allosterically and non-competitively inhibited by fructose 1,6-bisphosphate (FBP) and unphosphorylated phosphocarrier protein EIIA-Glc (III-Glc), an integral component of the bacterial phosphotransferase (PTS) system. In terms of biological role, key enzyme in the regulation of glycerol uptake and metabolism. Catalyzes the phosphorylation of glycerol to yield sn-glycerol 3-phosphate. The protein is Glycerol kinase of Klebsiella pneumoniae subsp. pneumoniae (strain ATCC 700721 / MGH 78578).